The primary structure comprises 198 residues: Segregation and condensation protein B (198 aa).

The interval 169 to 198 is disordered; the sequence is LADPAAEEPDQNEMDLFFDRFNQSKEQEEE.

Belongs to the ScpB family. In terms of assembly, homodimer. Homodimerization may be required to stabilize the binding of ScpA to the Smc head domains. Component of a cohesin-like complex composed of ScpA, ScpB and the Smc homodimer, in which ScpA and ScpB bind to the head domain of Smc. The presence of the three proteins is required for the association of the complex with DNA.

Its subcellular location is the cytoplasm. Functionally, participates in chromosomal partition during cell division. May act via the formation of a condensin-like complex containing Smc and ScpA that pull DNA away from mid-cell into both cell halves. The chain is Segregation and condensation protein B from Listeria monocytogenes serotype 4a (strain HCC23).